Here is a 310-residue protein sequence, read N- to C-terminus: MFNHVTVLLKETVDGLDIKPDGTYVDCTLGGGGHSSYLLSQLTEGGRLIAFDQDEIAIQNAKEKFSSYGEQFITVKSNFRYLSEKLQELGITEVDGILFDLGVSSPQLDTPERGFSYHHDAPLDMRMDQDASLTAYDVVNSWSYEQLVRIFFQYGEEKFSKQIARKIEAYRENKAIETTGELVELIKEGIPAPARRTGGHPAKRVFQAIRIAVNDELKVFEEALESAIEMVKPGGRVSVITFHSLEDRICKTTFKRNSTTPQLPPGLPIIPDEFKPKLKLITRKPILPSDIELEENNRARSAKLRIAEKR.

Residues 32-34, Asp-52, Phe-79, Asp-100, and Gln-107 contribute to the S-adenosyl-L-methionine site; that span reads GGH.

The protein belongs to the methyltransferase superfamily. RsmH family.

The protein localises to the cytoplasm. It catalyses the reaction cytidine(1402) in 16S rRNA + S-adenosyl-L-methionine = N(4)-methylcytidine(1402) in 16S rRNA + S-adenosyl-L-homocysteine + H(+). Specifically methylates the N4 position of cytidine in position 1402 (C1402) of 16S rRNA. This Bacillus thuringiensis subsp. konkukian (strain 97-27) protein is Ribosomal RNA small subunit methyltransferase H.